The sequence spans 346 residues: tRNA N6-adenosine threonylcarbamoyltransferase (346 aa).

The Fe cation site is built by His111 and His115. Substrate contacts are provided by residues 134-138 (LVSGG), Asp167, Gly180, and Asn277. Asp305 serves as a coordination point for Fe cation.

It belongs to the KAE1 / TsaD family. Fe(2+) serves as cofactor.

It localises to the cytoplasm. The enzyme catalyses L-threonylcarbamoyladenylate + adenosine(37) in tRNA = N(6)-L-threonylcarbamoyladenosine(37) in tRNA + AMP + H(+). In terms of biological role, required for the formation of a threonylcarbamoyl group on adenosine at position 37 (t(6)A37) in tRNAs that read codons beginning with adenine. Is involved in the transfer of the threonylcarbamoyl moiety of threonylcarbamoyl-AMP (TC-AMP) to the N6 group of A37, together with TsaE and TsaB. TsaD likely plays a direct catalytic role in this reaction. The protein is tRNA N6-adenosine threonylcarbamoyltransferase of Bordetella parapertussis (strain 12822 / ATCC BAA-587 / NCTC 13253).